The primary structure comprises 502 residues: Mannitol 2-dehydrogenase (502 aa).

37 to 48 (IVHIGVGGFHRA) is an NAD(+) binding site.

It belongs to the mannitol dehydrogenase family. As to quaternary structure, monomer.

It catalyses the reaction D-mannitol + NAD(+) = D-fructose + NADH + H(+). Catalyzes the NAD(H)-dependent interconversion of D-fructose and D-mannitol in the mannitol metabolic pathway. In Aspergillus fumigatus (strain CBS 144.89 / FGSC A1163 / CEA10) (Neosartorya fumigata), this protein is Mannitol 2-dehydrogenase.